Reading from the N-terminus, the 668-residue chain is tRNA 5-methylaminomethyl-2-thiouridine biosynthesis bifunctional protein MnmC (668 aa).

Residues 1–245 are tRNA (mnm(5)s(2)U34)-methyltransferase; that stretch reads MKHYSIQPAN…KREMLCGVME (245 aa). Residues 270–668 are FAD-dependent cmnm(5)s(2)U34 oxidoreductase; that stretch reads IGGGIASALL…LLKGKAVKAG (399 aa).

This sequence in the N-terminal section; belongs to the methyltransferase superfamily. tRNA (mnm(5)s(2)U34)-methyltransferase family. It in the C-terminal section; belongs to the DAO family. Requires FAD as cofactor.

The protein resides in the cytoplasm. It carries out the reaction 5-aminomethyl-2-thiouridine(34) in tRNA + S-adenosyl-L-methionine = 5-methylaminomethyl-2-thiouridine(34) in tRNA + S-adenosyl-L-homocysteine + H(+). Functionally, catalyzes the last two steps in the biosynthesis of 5-methylaminomethyl-2-thiouridine (mnm(5)s(2)U) at the wobble position (U34) in tRNA. Catalyzes the FAD-dependent demodification of cmnm(5)s(2)U34 to nm(5)s(2)U34, followed by the transfer of a methyl group from S-adenosyl-L-methionine to nm(5)s(2)U34, to form mnm(5)s(2)U34. The polypeptide is tRNA 5-methylaminomethyl-2-thiouridine biosynthesis bifunctional protein MnmC (Shigella dysenteriae serotype 1 (strain Sd197)).